Consider the following 77-residue polypeptide: MARVCDVTGKKPMVGNNVSHANNKTKRRFLPNLQYRRFWVESENRWVRLRVSSAALRLIDKNGIDSVLADLRARGQA.

It belongs to the bacterial ribosomal protein bL28 family.

The polypeptide is Large ribosomal subunit protein bL28 (Paracidovorax citrulli (strain AAC00-1) (Acidovorax citrulli)).